Here is a 709-residue protein sequence, read N- to C-terminus: ATP-binding cassette sub-family F member 3 (709 aa).

A2 carries the N-acetylalanine modification. S83 carries the phosphoserine modification. A compositionally biased stretch (basic and acidic residues) spans 129–143 (RLKAKQEKRSEKDTL). The tract at residues 129–171 (RLKAKQEKRSEKDTLKTSNPLVLEEASASQAGSRKESRLESSG) is disordered. Phosphoserine occurs at positions 155, 157, and 161. Residues 161 to 171 (SRKESRLESSG) are compositionally biased toward basic and acidic residues. ABC transporter domains lie at 178-424 (VRIE…LNQQ) and 492-707 (LQLD…RREG). 210–217 (GRNGLGKT) lines the ATP pocket. S283 is subject to Phosphoserine. Position 525 to 532 (525 to 532 (GENGAGKS)) interacts with ATP.

It belongs to the ABC transporter superfamily. ABCF family. EF3 subfamily.

Functionally, displays an antiviral effect against flaviviruses in the presence of OAS1B. In Pongo abelii (Sumatran orangutan), this protein is ATP-binding cassette sub-family F member 3 (ABCF3).